Here is a 306-residue protein sequence, read N- to C-terminus: Replication termination factor 2 (306 aa).

A disordered region spans residues 192–306 (RAKLEKKTKK…HWVTHTSYCF (115 aa)). The span at 226-240 (GKSEEADPDPREKKS) shows a compositional bias: basic and acidic residues. Phosphoserine is present on Ser287.

It belongs to the rtf2 family. As to quaternary structure, interacts with DDI2; probably also interacts with DDI1. Post-translationally, undergoes proteasomal degradation, via DDI1 and DDI2. Removal from stalled replisomes and degradation are required for genome stability.

The protein localises to the chromosome. In terms of biological role, replication termination factor which is a component of the elongating replisome. Required for ATR pathway signaling upon DNA damage and has a positive activity during DNA replication. Might function to facilitate fork pausing at replication fork barriers like the rDNA. May be globally required to stimulate ATR signaling after the fork stalls or encounters a lesion. Interacts with nascent DNA. This is Replication termination factor 2 from Rattus norvegicus (Rat).